The chain runs to 312 residues: Cobalamin biosynthesis protein CobD (312 aa).

Helical transmembrane passes span 61–81 (IALL…LPLL), 83–103 (IIVP…AQHA), 152–172 (DAVF…AVLY), and 292–312 (GMWL…AIHA).

Belongs to the CobD/CbiB family.

It localises to the cell membrane. It functions in the pathway cofactor biosynthesis; adenosylcobalamin biosynthesis. Converts cobyric acid to cobinamide by the addition of aminopropanol on the F carboxylic group. This chain is Cobalamin biosynthesis protein CobD, found in Chromobacterium violaceum (strain ATCC 12472 / DSM 30191 / JCM 1249 / CCUG 213 / NBRC 12614 / NCIMB 9131 / NCTC 9757 / MK).